The following is a 347-amino-acid chain: NHL repeat-containing protein 3 (347 aa).

A signal peptide spans 1–22 (MARAWVCLAGAAFFLSCLVLHS). One copy of the NHL 1 repeat lies at 47-93 (RLDLGWPKNSEYFTGATFCVAVDSLNGLVYVAQRGDNIPKVLVFSED). A glycan (N-linked (GlcNAc...) asparagine) is linked at Asn101. NHL repeat units follow at residues 150–196 (TPGK…LSQD) and 200–243 (LWLR…FDKD). Asn206 and Asn278 each carry an N-linked (GlcNAc...) asparagine glycan. An NHL 4 repeat occupies 294 to 338 (GDCSVVSTIQLADQVLPHLLEVDRKTGAVYVAEIGAKQIQKYIPW).

The sequence is that of NHL repeat-containing protein 3 (Nhlrc3) from Mus musculus (Mouse).